The primary structure comprises 429 residues: Ribosomal RNA small subunit methyltransferase B (429 aa).

S-adenosyl-L-methionine is bound by residues 254 to 260 (CAAPGGK), aspartate 277, aspartate 303, and aspartate 322. Residue cysteine 375 is the Nucleophile of the active site.

This sequence belongs to the class I-like SAM-binding methyltransferase superfamily. RsmB/NOP family.

It localises to the cytoplasm. The enzyme catalyses cytidine(967) in 16S rRNA + S-adenosyl-L-methionine = 5-methylcytidine(967) in 16S rRNA + S-adenosyl-L-homocysteine + H(+). In terms of biological role, specifically methylates the cytosine at position 967 (m5C967) of 16S rRNA. The chain is Ribosomal RNA small subunit methyltransferase B from Shigella boydii serotype 4 (strain Sb227).